We begin with the raw amino-acid sequence, 421 residues long: Lipid II:glycine glycyltransferase (421 aa).

The protein belongs to the FemABX family. As to quaternary structure, monomer.

The protein resides in the cytoplasm. It carries out the reaction beta-D-GlcNAc-(1-&gt;4)-Mur2Ac(oyl-L-Ala-D-isoglutaminyl-L-Lys-D-Ala-D-Ala)-di-trans,octa-cis-undecaprenyl diphosphate + glycyl-tRNA(Gly) = beta-D-GlcNAc-(1-&gt;4)-Mur2Ac(oyl-L-Ala-D-isoglutaminyl-L-Lys-(N(6)-Gly)-D-Ala-D-Ala)-di-trans,octa-cis-undecaprenyl diphosphate + tRNA(Gly) + H(+). Functionally, catalyzes the incorporation of the first glycine of the pentaglycine interpeptide bridge, which is characteristic of the S.aureus peptidoglycan. This glycine is added to the epsilon-amino group of the L-lysine of the membrane-bound lipid II intermediate (GlcNAc-(beta-1,4)-N-acetylmuramic acid(-L-Ala-D-iGln-L-Lys-D-Ala-D-Ala)-pyrophosphoryl-undecaprenol), using glycyl-tRNA(Gly) as donor, in a ribosome-independent mechanism. Involved in methicillin resistance. The polypeptide is Lipid II:glycine glycyltransferase (femX) (Staphylococcus aureus (strain USA300)).